The sequence spans 298 residues: uncharacterized protein (298 aa).

8 helical membrane passes run 5 to 25, 52 to 72, 105 to 125, 138 to 158, 163 to 183, 208 to 228, 236 to 256, and 273 to 293; these read SLAT…FLLW, VISG…FLAL, LFLL…QVLV, IFWG…LLML, IQGG…NDIA, GLMG…PLLT, LLAG…MSAI, and GGLL…FYFI.

Belongs to the CDS family.

It is found in the cell membrane. This is an uncharacterized protein from Escherichia coli (strain K12).